Here is a 362-residue protein sequence, read N- to C-terminus: Chorismate synthase (362 aa).

The NADP(+) site is built by Arg-48 and Arg-54. Residues 125-127 (RSS), 241-242 (NA), Gly-286, 301-305 (KPTSS), and Arg-327 each bind FMN.

It belongs to the chorismate synthase family. As to quaternary structure, homotetramer. Requires FMNH2 as cofactor.

The catalysed reaction is 5-O-(1-carboxyvinyl)-3-phosphoshikimate = chorismate + phosphate. The protein operates within metabolic intermediate biosynthesis; chorismate biosynthesis; chorismate from D-erythrose 4-phosphate and phosphoenolpyruvate: step 7/7. Its function is as follows. Catalyzes the anti-1,4-elimination of the C-3 phosphate and the C-6 proR hydrogen from 5-enolpyruvylshikimate-3-phosphate (EPSP) to yield chorismate, which is the branch point compound that serves as the starting substrate for the three terminal pathways of aromatic amino acid biosynthesis. This reaction introduces a second double bond into the aromatic ring system. The protein is Chorismate synthase of Paramagnetospirillum magneticum (strain ATCC 700264 / AMB-1) (Magnetospirillum magneticum).